A 474-amino-acid chain; its full sequence is Ribulose bisphosphate carboxylase large chain (474 aa).

Substrate-binding residues include Asn123 and Thr173. Lys175 functions as the Proton acceptor in the catalytic mechanism. Lys177 lines the substrate pocket. Positions 201, 203, and 204 each coordinate Mg(2+). Residue Lys201 is modified to N6-carboxylysine. Residue His293 is the Proton acceptor of the active site. Positions 294, 326, and 378 each coordinate substrate.

Belongs to the RuBisCO large chain family. Type I subfamily. In terms of assembly, heterohexadecamer of 8 large chains and 8 small chains; disulfide-linked. The disulfide link is formed within the large subunit homodimers. The cofactor is Mg(2+). In terms of processing, the disulfide bond which can form in the large chain dimeric partners within the hexadecamer appears to be associated with oxidative stress and protein turnover.

Its subcellular location is the carboxysome. The catalysed reaction is 2 (2R)-3-phosphoglycerate + 2 H(+) = D-ribulose 1,5-bisphosphate + CO2 + H2O. The enzyme catalyses D-ribulose 1,5-bisphosphate + O2 = 2-phosphoglycolate + (2R)-3-phosphoglycerate + 2 H(+). Functionally, ruBisCO catalyzes two reactions: the carboxylation of D-ribulose 1,5-bisphosphate, the primary event in carbon dioxide fixation, as well as the oxidative fragmentation of the pentose substrate in the photorespiration process. Both reactions occur simultaneously and in competition at the same active site. This is Ribulose bisphosphate carboxylase large chain from Synechococcus sp.